The sequence spans 337 residues: Probable RuBisCO transcriptional regulator (337 aa).

Positions 6-63 (FTLDQLRILKAIAVEGSFKRAADSLYVSQPAVSLQVQNLERQLDVPLFDRGGRRAQLT) constitute an HTH lysR-type domain. Residues 23-42 (FKRAADSLYVSQPAVSLQVQ) constitute a DNA-binding region (H-T-H motif).

This sequence belongs to the LysR transcriptional regulatory family.

In terms of biological role, trans-acting transcriptional regulator of RuBisCO genes (rbcL and rbcS) expression. The sequence is that of Probable RuBisCO transcriptional regulator (rbcR) from Nostoc sp. (strain PCC 7120 / SAG 25.82 / UTEX 2576).